A 275-amino-acid polypeptide reads, in one-letter code: Rhamnulose-1-phosphate aldolase (275 aa).

Residue E117 is part of the active site. Positions 141, 143, and 212 each coordinate Zn(2+).

Belongs to the aldolase class II family. RhaD subfamily. Homotetramer. Zn(2+) is required as a cofactor.

The protein resides in the cytoplasm. It catalyses the reaction L-rhamnulose 1-phosphate = (S)-lactaldehyde + dihydroxyacetone phosphate. It participates in carbohydrate degradation; L-rhamnose degradation; glycerone phosphate from L-rhamnose: step 3/3. Its function is as follows. Catalyzes the reversible cleavage of L-rhamnulose-1-phosphate to dihydroxyacetone phosphate (DHAP) and L-lactaldehyde. This chain is Rhamnulose-1-phosphate aldolase, found in Salmonella paratyphi C (strain RKS4594).